Here is a 231-residue protein sequence, read N- to C-terminus: Phosphoribosylformylglycinamidine synthase subunit PurQ (231 aa).

The Glutamine amidotransferase type-1 domain maps to 3–231 (FGVLIFPGSN…ESMVGAMAKR (229 aa)). Catalysis depends on C86, which acts as the Nucleophile. Active-site residues include H203 and E205.

Part of the FGAM synthase complex composed of 1 PurL, 1 PurQ and 2 PurS subunits.

It localises to the cytoplasm. It carries out the reaction N(2)-formyl-N(1)-(5-phospho-beta-D-ribosyl)glycinamide + L-glutamine + ATP + H2O = 2-formamido-N(1)-(5-O-phospho-beta-D-ribosyl)acetamidine + L-glutamate + ADP + phosphate + H(+). It catalyses the reaction L-glutamine + H2O = L-glutamate + NH4(+). The protein operates within purine metabolism; IMP biosynthesis via de novo pathway; 5-amino-1-(5-phospho-D-ribosyl)imidazole from N(2)-formyl-N(1)-(5-phospho-D-ribosyl)glycinamide: step 1/2. Functionally, part of the phosphoribosylformylglycinamidine synthase complex involved in the purines biosynthetic pathway. Catalyzes the ATP-dependent conversion of formylglycinamide ribonucleotide (FGAR) and glutamine to yield formylglycinamidine ribonucleotide (FGAM) and glutamate. The FGAM synthase complex is composed of three subunits. PurQ produces an ammonia molecule by converting glutamine to glutamate. PurL transfers the ammonia molecule to FGAR to form FGAM in an ATP-dependent manner. PurS interacts with PurQ and PurL and is thought to assist in the transfer of the ammonia molecule from PurQ to PurL. In Koribacter versatilis (strain Ellin345), this protein is Phosphoribosylformylglycinamidine synthase subunit PurQ.